The following is a 189-amino-acid chain: Ras-like protein 1 (189 aa).

Position 10-17 (10-17) interacts with GTP; it reads GAGGVGKS. Positions 32–40 match the Effector region motif; it reads YDPTIEDSY. Residues 57–61 and 116–119 contribute to the GTP site; these read DTAGQ and NKCD. C186 is subject to Cysteine methyl ester. Residue C186 is the site of S-geranylgeranyl cysteine attachment. Positions 187-189 are cleaved as a propeptide — removed in mature form; sequence KIL.

This sequence belongs to the small GTPase superfamily. Ras family.

The protein resides in the cell membrane. It catalyses the reaction GTP + H2O = GDP + phosphate + H(+). With respect to regulation, alternates between an inactive form bound to GDP and an active form bound to GTP. Activated by a guanine nucleotide-exchange factor (GEF) and inactivated by a GTPase-activating protein (GAP). Its function is as follows. Ras proteins bind GDP/GTP and possess intrinsic GTPase activity. Plays a role in eye development by regulating cell growth, survival of postmitotic ommatidial cells and differentiation of photoreceptor cells. During larval development, mediates Ptth/tor signaling leading to the production of ecdysone, a hormone required for the initiation of metamorphosis. The sequence is that of Ras-like protein 1 from Drosophila persimilis (Fruit fly).